The primary structure comprises 1002 residues: Eukaryotic translation initiation factor 5B (1002 aa).

Disordered stretches follow at residues 1-172 (MAKK…GLAA) and 184-402 (EEQE…NKKD). Residues 13-23 (WDEEFEEDAAQ) show a composition bias toward acidic residues. Positions 27 to 37 (ISATPTPNPES) are enriched in polar residues. The span at 47 to 57 (EASASAEGAEA) shows a compositional bias: low complexity. 2 stretches are compositionally biased toward basic and acidic residues: residues 75-111 (KKVI…EQAA) and 120-154 (QKEK…ESDK). The segment covering 155 to 172 (PSASAKKPAKKVPAGLAA) has biased composition (low complexity). 2 stretches are compositionally biased toward basic and acidic residues: residues 184–252 (EEQE…ERRR) and 267–276 (AKKDGEENKP). Residues 277-287 (KKVVYSKKKKR) are compositionally biased toward basic residues. Residues 297–306 (IKSDSKKDSE) are compositionally biased toward basic and acidic residues. Acidic residues-rich tracts occupy residues 307 to 342 (VVPD…EETQ) and 352 to 370 (DQNQ…EEEE). Over residues 381-398 (STPAATPAATPTPSSASP) the composition is skewed to low complexity. The tr-type G domain occupies 403–621 (LRSPICCILG…LLELTQKRMS (219 aa)). Position 405 is a phosphoserine (S405). The segment at 412-419 (GHVDTGKT) is G1. K(+) is bound at residue D415. D415 is a Na(+) binding site. GTP is bound by residues 415 to 420 (DTGKTK), Q431, and 437 to 439 (GIT). T419 contacts Mg(2+). G437 lines the K(+) pocket. G437 provides a ligand contact to Na(+). The tract at residues 437–441 (GITQQ) is G2. Mg(2+) is bound at residue T439. The interval 476-479 (DTPG) is G3. GTP is bound by residues 530–533 (NKID) and 599–600 (AV). A G4 region spans residues 530–533 (NKID). The interval 598–600 (SAV) is G5.

Belongs to the TRAFAC class translation factor GTPase superfamily. Classic translation factor GTPase family. IF-2 subfamily. It depends on Na(+) as a cofactor. K(+) is required as a cofactor.

It is found in the cytoplasm. The catalysed reaction is GTP + H2O = GDP + phosphate + H(+). Functionally, plays a role in translation initiation. Translational GTPase that catalyzes the joining of the 40S and 60S subunits to form the 80S initiation complex with the initiator methionine-tRNA in the P-site base paired to the start codon. GTP binding and hydrolysis induces conformational changes in the enzyme that renders it active for productive interactions with the ribosome. The release of the enzyme after formation of the initiation complex is a prerequisite to form elongation-competent ribosomes. Stimulates 20S pre-rRNA cleavage to mature 18S rRNA by PIN-domain endonuclease NOB1. In Saccharomyces cerevisiae (strain ATCC 204508 / S288c) (Baker's yeast), this protein is Eukaryotic translation initiation factor 5B.